Here is a 473-residue protein sequence, read N- to C-terminus: Photosystem II CP43 reaction center protein (473 aa).

The propeptide occupies 1–14 (MKTLYSLRRFYPVE). Position 15 is an N-acetylthreonine (T15). Residue T15 is modified to Phosphothreonine. Transmembrane regions (helical) follow at residues 69-93 (LFEV…PHLA), 134-155 (LLGP…KDRN), 178-200 (KALY…RKIT), 255-275 (KPFA…LSYS), and 291-312 (WFNN…ASQA). E367 contributes to the [CaMn4O5] cluster binding site. The propeptide occupies 426-473 (LSTSHFVLGFFLFVGHLWHAGRARAAAAGFEKGIDRDFEPVLSMTPLN). The chain crosses the membrane as a helical span at residues 447-471 (RARAAAAGFEKGIDRDFEPVLSMTP).

The protein belongs to the PsbB/PsbC family. PsbC subfamily. In terms of assembly, PSII is composed of 1 copy each of membrane proteins PsbA, PsbB, PsbC, PsbD, PsbE, PsbF, PsbH, PsbI, PsbJ, PsbK, PsbL, PsbM, PsbT, PsbX, PsbY, PsbZ, Psb30/Ycf12, at least 3 peripheral proteins of the oxygen-evolving complex and a large number of cofactors. It forms dimeric complexes. It depends on Binds multiple chlorophylls and provides some of the ligands for the Ca-4Mn-5O cluster of the oxygen-evolving complex. It may also provide a ligand for a Cl- that is required for oxygen evolution. PSII binds additional chlorophylls, carotenoids and specific lipids. as a cofactor. In terms of processing, over time a tryptophan in the fifth lumenal loop is converted to 2-hydroxy-2,3-dihydrotryptophan, 2-oxo-2,3-dihydrotryptophan, and kynurenine by oxidizing species from the active site. This oxidation targets the protein for turnover.

It is found in the plastid. Its subcellular location is the chloroplast thylakoid membrane. Its function is as follows. One of the components of the core complex of photosystem II (PSII). It binds chlorophyll and helps catalyze the primary light-induced photochemical processes of PSII. PSII is a light-driven water:plastoquinone oxidoreductase, using light energy to abstract electrons from H(2)O, generating O(2) and a proton gradient subsequently used for ATP formation. The protein is Photosystem II CP43 reaction center protein of Spinacia oleracea (Spinach).